The chain runs to 324 residues: MKPSIILYKKLPDVLLQRLEEHFTVTQVSNLSPQTVEQHAEAFANAEGLLGSSEKVDDALLEKMPKLRATSTISVGYDNFDVDALNARKVLLMHTPTVLTETVADTLMALILATSRRVVEVAERVKAGEWTASIGPDWFGSDVHHKTLGIVGMGRIGMALAQRAHFGFNMPILYNARRQHPQAEERFNARYCDLDTLLQEADFVCLILPLTEETHHLFGAEQFAKMKSSAIFINAGRGPVVDEKALISALQKGEIHAAGLDVFEREPLPVDSPLLAMPNVVALPHIGSATHETRYNMAACAVDNLIAALQGNVDKNCVNPQVAK.

Active-site residues include Arg-237 and Glu-266. The active-site Proton donor is the His-285.

This sequence belongs to the D-isomer specific 2-hydroxyacid dehydrogenase family. GhrB subfamily. In terms of assembly, homodimer.

The protein localises to the cytoplasm. The enzyme catalyses glycolate + NADP(+) = glyoxylate + NADPH + H(+). It catalyses the reaction (R)-glycerate + NAD(+) = 3-hydroxypyruvate + NADH + H(+). The catalysed reaction is (R)-glycerate + NADP(+) = 3-hydroxypyruvate + NADPH + H(+). In terms of biological role, catalyzes the NADPH-dependent reduction of glyoxylate and hydroxypyruvate into glycolate and glycerate, respectively. The sequence is that of Glyoxylate/hydroxypyruvate reductase B from Escherichia fergusonii (strain ATCC 35469 / DSM 13698 / CCUG 18766 / IAM 14443 / JCM 21226 / LMG 7866 / NBRC 102419 / NCTC 12128 / CDC 0568-73).